Here is a 501-residue protein sequence, read N- to C-terminus: Lysine--tRNA ligase (501 aa).

Mg(2+) is bound by residues E411 and E418.

This sequence belongs to the class-II aminoacyl-tRNA synthetase family. As to quaternary structure, homodimer. Mg(2+) serves as cofactor.

Its subcellular location is the cytoplasm. The enzyme catalyses tRNA(Lys) + L-lysine + ATP = L-lysyl-tRNA(Lys) + AMP + diphosphate. This Magnetococcus marinus (strain ATCC BAA-1437 / JCM 17883 / MC-1) protein is Lysine--tRNA ligase.